The chain runs to 490 residues: Betaine aldehyde dehydrogenase (490 aa).

Threonine 26 and aspartate 93 together coordinate K(+). 150–152 (GAW) is an NAD(+) binding site. Lysine 162 serves as the catalytic Charge relay system. 176–179 (KPSE) contacts NAD(+). Valine 180 serves as a coordination point for K(+). 230-233 (GVAT) lines the NAD(+) pocket. Residue leucine 246 participates in K(+) binding. Glutamate 252 acts as the Proton acceptor in catalysis. Residues glycine 254, cysteine 286, and glutamate 387 each contribute to the NAD(+) site. Cysteine 286 serves as the catalytic Nucleophile. Cysteine 286 is subject to Cysteine sulfenic acid (-SOH). Positions 457 and 460 each coordinate K(+). The active-site Charge relay system is the glutamate 464.

It belongs to the aldehyde dehydrogenase family. As to quaternary structure, dimer of dimers. K(+) serves as cofactor.

It catalyses the reaction betaine aldehyde + NAD(+) + H2O = glycine betaine + NADH + 2 H(+). The protein operates within amine and polyamine biosynthesis; betaine biosynthesis via choline pathway; betaine from betaine aldehyde: step 1/1. Its function is as follows. Involved in the biosynthesis of the osmoprotectant glycine betaine. Catalyzes the irreversible oxidation of betaine aldehyde to the corresponding acid. This is Betaine aldehyde dehydrogenase from Stenotrophomonas maltophilia (strain K279a).